We begin with the raw amino-acid sequence, 350 residues long: UDP-N-acetylenolpyruvoylglucosamine reductase (350 aa).

Positions 24–195 (HVEATARWLL…VAVEFNLPLL (172 aa)) constitute an FAD-binding PCMH-type domain. Arg-172 is a catalytic residue. Residue Ser-245 is the Proton donor of the active site. The active site involves Glu-342.

This sequence belongs to the MurB family. The cofactor is FAD.

The protein resides in the cytoplasm. It catalyses the reaction UDP-N-acetyl-alpha-D-muramate + NADP(+) = UDP-N-acetyl-3-O-(1-carboxyvinyl)-alpha-D-glucosamine + NADPH + H(+). The protein operates within cell wall biogenesis; peptidoglycan biosynthesis. Functionally, cell wall formation. This is UDP-N-acetylenolpyruvoylglucosamine reductase from Xanthomonas oryzae pv. oryzae (strain MAFF 311018).